Consider the following 376-residue polypeptide: 3-aminomethylindole N-methyltransferase (376 aa).

S-adenosyl-L-homocysteine is bound by residues G220, D243, D263, and M264.

The protein belongs to the class I-like SAM-binding methyltransferase superfamily. Cation-independent O-methyltransferase family. In terms of tissue distribution, more present in the fifth leaf than in the second leaf (at protein level).

The catalysed reaction is 3-(aminomethyl)indole + 2 S-adenosyl-L-methionine = gramine + 2 S-adenosyl-L-homocysteine + 2 H(+). Its pathway is alkaloid biosynthesis. With respect to regulation, repressed by sodium carbonate, sodium bicarbonate and K-phosphate. In terms of biological role, methylates 3-aminomethylindole (AMI) and N-methyl-3-aminomethylindole (MAMI), two substrates involved in gramine biosynthesis, a toxic indole alkaloid. Can use S-adenosyl-L-methionine (AdoMet) as a methyl donor. Unable to mediate caffeic acid O-methylation. The polypeptide is 3-aminomethylindole N-methyltransferase (Hordeum vulgare subsp. vulgare (Domesticated barley)).